A 658-amino-acid chain; its full sequence is Heat shock 70 kDa protein, mitochondrial (658 aa).

The tract at residues 629–658 (KLDSSASKSSSTENKENKDNTTEAEFTEKK) is disordered. Residues 631–640 (DSSASKSSST) show a composition bias toward low complexity. The span at 641 to 658 (ENKENKDNTTEAEFTEKK) shows a compositional bias: basic and acidic residues.

The protein belongs to the heat shock protein 70 family.

Its subcellular location is the mitochondrion. In terms of biological role, may function in protein folding and assembly, and disassembly of protein complexes. This Dictyostelium discoideum (Social amoeba) protein is Heat shock 70 kDa protein, mitochondrial (mhsp70).